We begin with the raw amino-acid sequence, 35 residues long: VSIGIKCDPSIDLCEGQCRIRYFTGYCSGDTCHCS.

Disulfide bonds link Cys7/Cys27, Cys14/Cys32, and Cys18/Cys34.

Expressed by the venom gland.

Its subcellular location is the secreted. Its function is as follows. Neurotoxin. Decreases the action potential of myelinated nerves in mice and frogs. The sequence is that of Neurotoxin from Buthus sp. (strain IY-2001) (Scorpion).